The chain runs to 215 residues: uncharacterized protein (215 aa).

Transmembrane regions (helical) follow at residues 21 to 40 (IIKY…VLIN), 50 to 69 (LIFS…SVIF), 95 to 117 (FFAI…YVLF), 122 to 144 (LEII…LVVL), 156 to 178 (ANFV…GLIL), and 183 to 205 (LQLI…FLSS).

It belongs to the CcmB/CycW/HelB family.

Its subcellular location is the cell membrane. This is an uncharacterized protein from Rickettsia conorii (strain ATCC VR-613 / Malish 7).